The following is a 315-amino-acid chain: Ornithine carbamoyltransferase (315 aa).

Residues 53 to 56 (STRT), Gln-80, Arg-104, and 131 to 134 (HPCQ) contribute to the carbamoyl phosphate site. L-ornithine-binding positions include Asn-163, Asp-227, and 231–232 (SM). Carbamoyl phosphate-binding positions include 267-268 (CL) and Arg-295.

The protein belongs to the aspartate/ornithine carbamoyltransferase superfamily. OTCase family.

Its subcellular location is the cytoplasm. It catalyses the reaction carbamoyl phosphate + L-ornithine = L-citrulline + phosphate + H(+). It functions in the pathway amino-acid biosynthesis; L-arginine biosynthesis; L-arginine from L-ornithine and carbamoyl phosphate: step 1/3. In terms of biological role, reversibly catalyzes the transfer of the carbamoyl group from carbamoyl phosphate (CP) to the N(epsilon) atom of ornithine (ORN) to produce L-citrulline. The chain is Ornithine carbamoyltransferase from Rhodococcus jostii (strain RHA1).